Consider the following 81-residue polypeptide: uncharacterized protein (81 aa).

This is an uncharacterized protein from Mycoplasma (Bacteriophage L2).